Here is a 230-residue protein sequence, read N- to C-terminus: Somatolactin (230 aa).

Residues 1–23 form the signal peptide; that stretch reads MMTAVKQSGVWAVLLWPYLLAVS. Intrachain disulfides connect C28–C38, C88–C204, and C221–C229. N-linked (GlcNAc...) asparagine glycosylation is found at N34 and N144.

This sequence belongs to the somatotropin/prolactin family. In terms of tissue distribution, pituitary gland.

It is found in the secreted. The chain is Somatolactin from Solea senegalensis (Senegalese sole).